We begin with the raw amino-acid sequence, 266 residues long: Glucosamine-6-phosphate deaminase (266 aa).

Asp72 serves as the catalytic Proton acceptor; for enolization step. Residue Asp141 is the For ring-opening step of the active site. Residue His143 is the Proton acceptor; for ring-opening step of the active site. Glu148 serves as the catalytic For ring-opening step.

This sequence belongs to the glucosamine/galactosamine-6-phosphate isomerase family. NagB subfamily. As to quaternary structure, homohexamer.

The enzyme catalyses alpha-D-glucosamine 6-phosphate + H2O = beta-D-fructose 6-phosphate + NH4(+). The protein operates within amino-sugar metabolism; N-acetylneuraminate degradation; D-fructose 6-phosphate from N-acetylneuraminate: step 5/5. Allosterically activated by N-acetylglucosamine 6-phosphate (GlcNAc6P). Catalyzes the reversible isomerization-deamination of glucosamine 6-phosphate (GlcN6P) to form fructose 6-phosphate (Fru6P) and ammonium ion. This chain is Glucosamine-6-phosphate deaminase, found in Aliivibrio salmonicida (strain LFI1238) (Vibrio salmonicida (strain LFI1238)).